Consider the following 122-residue polypeptide: Small ribosomal subunit protein uS13 (122 aa).

Residues proline 97–lysine 122 form a disordered region.

It belongs to the universal ribosomal protein uS13 family. Part of the 30S ribosomal subunit. Forms a loose heterodimer with protein S19. Forms two bridges to the 50S subunit in the 70S ribosome.

In terms of biological role, located at the top of the head of the 30S subunit, it contacts several helices of the 16S rRNA. In the 70S ribosome it contacts the 23S rRNA (bridge B1a) and protein L5 of the 50S subunit (bridge B1b), connecting the 2 subunits; these bridges are implicated in subunit movement. Contacts the tRNAs in the A and P-sites. The sequence is that of Small ribosomal subunit protein uS13 from Brucella abortus (strain S19).